The sequence spans 516 residues: 2,3-bisphosphoglycerate-independent phosphoglycerate mutase (516 aa).

2 residues coordinate Mn(2+): Asp-15 and Ser-65. Residue Ser-65 is the Phosphoserine intermediate of the active site. Substrate contacts are provided by residues His-126, 156–157, Arg-188, Arg-194, 263–266, and Lys-336; these read RD and RADR. Positions 403, 407, 444, 445, and 463 each coordinate Mn(2+).

Belongs to the BPG-independent phosphoglycerate mutase family. Monomer. Mn(2+) is required as a cofactor.

It carries out the reaction (2R)-2-phosphoglycerate = (2R)-3-phosphoglycerate. It participates in carbohydrate degradation; glycolysis; pyruvate from D-glyceraldehyde 3-phosphate: step 3/5. Functionally, catalyzes the interconversion of 2-phosphoglycerate and 3-phosphoglycerate. This Francisella tularensis subsp. holarctica (strain OSU18) protein is 2,3-bisphosphoglycerate-independent phosphoglycerate mutase.